Consider the following 1476-residue polypeptide: Cystic fibrosis transmembrane conductance regulator (1476 aa).

At 1–77 (MQKSPLEKAS…QLIHALRRCF (77 aa)) the chain is on the cytoplasmic side. Residues 78–98 (FWRFLFYGILLYLGEVTKAVQ) form a helical membrane-spanning segment. The 285-residue stretch at 81–365 (FLFYGILLYL…TAVQIWYDSF (285 aa)) folds into the ABC transmembrane type-1 1 domain. At 99 to 122 (PVLLGRIIASYDPENKVERSIAIY) the chain is on the extracellular side. Residues 123-146 (LGIGLCLLFIVRTLLLHPAIFGLH) traverse the membrane as a helical segment. The Cytoplasmic portion of the chain corresponds to 147–195 (RIGMQMRTAMFSLIYKKTLKLSSRVLDKISIGQLVSLLSNNLNKFDEGL). The chain crosses the membrane as a helical span at residues 196–216 (ALAHFIWIAPLQVTLLMGLLW). Residues 217–222 (DLLQFS) are Extracellular-facing. The chain crosses the membrane as a helical span at residues 223 to 243 (AFCGLGLLIILVIFQAILGKM). The Cytoplasmic segment spans residues 244–298 (MVKYRDQRAAKINERLVITSEIIDNIYSVKAYCWESAMEKMIENLREVELKMTRK). Residues 299 to 319 (AAYMRFFTSSAFFFSGFFVVF) traverse the membrane as a helical segment. The Extracellular portion of the chain corresponds to 320–339 (LSVLPYTVINGIVLRKIFTT). The helical transmembrane segment at 340-358 (ISFCIVLRMSVTRQFPTAV) threads the bilayer. At 359 to 853 (QIWYDSFGMI…YLRYFTLHKG (495 aa)) the chain is on the cytoplasmic side. ATP is bound by residues W401, 458 to 465 (GSTGSGKT), and Q493. The 224-residue stretch at 423–646 (SDENNVSFSH…RPDFSSKLMG (224 aa)) folds into the ABC transporter 1 domain. C524 carries S-palmitoyl cysteine lipidation. S549 and S660 each carry phosphoserine. A disordered R region region spans residues 654-826 (TEERRSSILT…EEINEEDLKE (173 aa)). Position 670 is a phosphoserine; by PKA (S670). Phosphoserine occurs at positions 684, 698, and 710. At T715 the chain carries Phosphothreonine. Phosphoserine occurs at positions 732, 763, 785, 790, and 808. Residues 854–874 (LLLVLIWCVLVFLVEVAASLF) form a helical membrane-spanning segment. The ABC transmembrane type-1 2 domain occupies 854–1153 (LLLVLIWCVL…SSIDTDSLMR (300 aa)). Over 875–913 (VLWLLKNNPVNSGNNGTKISNSSYVVIITSTSFYYIFYI) the chain is Extracellular. N889 and N895 each carry an N-linked (GlcNAc...) asparagine glycan. The chain crosses the membrane as a discontinuously helical span at residues 914–934 (YVGVADTLLALSLFRGLPLVH). The Cytoplasmic portion of the chain corresponds to 935 to 985 (TLITASKILHRKMLHSILHAPMSTISKLKAGGILNRFSKDIAILDDFLPLT). The chain crosses the membrane as a helical span at residues 986–1006 (IFDFIQLVFIVIGAIIVVSAL). Residues 1007–1008 (QP) lie on the Extracellular side of the membrane. The helical transmembrane segment at 1009 to 1029 (YIFLATVPGLVVFILLRAYFL) threads the bilayer. Over 1030–1090 (HTAQQLKQLE…TANWFMYLAT (61 aa)) the chain is Cytoplasmic. Residues 1091–1111 (LRWFQMRIDMIFVLFFIVVTF) traverse the membrane as a helical segment. Over 1112–1125 (ISILTTGEGEGTAG) the chain is Extracellular. A helical transmembrane segment spans residues 1126–1146 (IILTLAMNIMSTLQWAVNSSI). The Cytoplasmic portion of the chain corresponds to 1147–1476 (DTDSLMRSVS…TEEEVQETRL (330 aa)). Residues 1208 to 1439 (VKDLTVKYMD…KSIFQQAISS (232 aa)) enclose the ABC transporter 2 domain. ATP is bound by residues Y1215 and 1240-1247 (GRTGSGKS). An interaction with GORASP2 region spans residues 1382 to 1476 (RVLKQAFAGC…TEEEVQETRL (95 aa)). A lipid anchor (S-palmitoyl cysteine) is attached at C1391. A phosphoserine mark is found at S1440 and S1452. The tract at residues 1446–1476 (FQGRHSSKHKPRTQITALKEETEEEVQETRL) is disordered. A compositionally biased stretch (acidic residues) spans 1466–1476 (ETEEEVQETRL). Positions 1474–1476 (TRL) match the PDZ-binding motif.

It belongs to the ABC transporter superfamily. ABCC family. CFTR transporter (TC 3.A.1.202) subfamily. As to quaternary structure, monomer; does not require oligomerization for channel activity. May form oligomers in the membrane. Interacts with SLC26A3, SLC26A6 and NHERF1. Interacts with SHANK2. Interacts with MYO6. Interacts (via C-terminus) with GOPC (via PDZ domain); this promotes CFTR internalization and thereby decreases channel activity. Interacts with SLC4A7 through NHERF1. Found in a complex with MYO5B and RAB11A. Interacts with ANO1. Interacts with SLC26A8. Interacts with AHCYL1; the interaction increases CFTR activity. Interacts with CSE1L. The core-glycosylated form interacts with GORASP2 (via PDZ GRASP-type 1 domain) in respone to ER stress. Interacts with MARCHF2; the interaction leads to CFTR ubiqtuitination and degradation. Interacts with ADGRG2. Post-translationally, N-glycosylated. Phosphorylated; cAMP treatment promotes phosphorylation and activates the channel. Dephosphorylation decreases the ATPase activity (in vitro). Phosphorylation at PKA sites activates the channel. Phosphorylation at PKC sites enhances the response to phosphorylation by PKA. Phosphorylated by AMPK; this inhibits channel activity. In terms of processing, ubiquitinated, leading to its degradation in the lysosome. Deubiquitination by USP10 in early endosomes enhances its endocytic recycling to the cell membrane. Ubiquitinated by RNF185 during ER stress. Ubiquitinated by MARCHF2. In terms of tissue distribution, expressed in the epididymis (at protein level). In the initial segment of the epididymis, detected on both the luminal and basolateral sides of the ducts where it is expressed in the duct columnar cells as well as in the interstitial smooth muscle cells. Expressed in sperm in the caput. In the cauda, detected along the luminal border but not continuously and is also expressed on the basolateral surface. Within the caudal lumen, detected on sperm. Isoform 1: Expressed in a variety of epithelial tissues including colon, kidney, lung, small intestine, pancreatic duct and testis. Isoform 2: Expressed only in testis. Isoform 3: Expressed only in testis.

It is found in the apical cell membrane. Its subcellular location is the early endosome membrane. The protein resides in the cell membrane. It localises to the recycling endosome membrane. The protein localises to the endoplasmic reticulum membrane. It is found in the nucleus. The enzyme catalyses ATP + H2O + closed Cl(-) channel = ADP + phosphate + open Cl(-) channel.. It carries out the reaction chloride(in) = chloride(out). It catalyses the reaction hydrogencarbonate(in) = hydrogencarbonate(out). The catalysed reaction is ATP + H2O = ADP + phosphate + H(+). Its function is as follows. Epithelial ion channel that plays an important role in the regulation of epithelial ion and water transport and fluid homeostasis. Mediates the transport of chloride ions across the cell membrane. Possesses an intrinsic ATPase activity and utilizes ATP to gate its channel; the passive flow of anions through the channel is gated by cycles of ATP binding and hydrolysis by the ATP-binding domains. The ion channel is also permeable to HCO(3)(-); selectivity depends on the extracellular chloride concentration. Exerts its function also by modulating the activity of other ion channels and transporters. Contributes to the regulation of the pH and the ion content of the epithelial fluid layer. Modulates the activity of the epithelial sodium channel (ENaC) complex, in part by regulating the cell surface expression of the ENaC complex. May regulate bicarbonate secretion and salvage in epithelial cells by regulating the transporter SLC4A7. Can inhibit the chloride channel activity of ANO1. Plays a role in the chloride and bicarbonate homeostasis during sperm epididymal maturation and capacitation. The sequence is that of Cystic fibrosis transmembrane conductance regulator from Mus musculus (Mouse).